The primary structure comprises 346 residues: UDP-3-O-acylglucosamine N-acyltransferase (346 aa).

His-240 functions as the Proton acceptor in the catalytic mechanism.

It belongs to the transferase hexapeptide repeat family. LpxD subfamily. As to quaternary structure, homotrimer.

The catalysed reaction is a UDP-3-O-[(3R)-3-hydroxyacyl]-alpha-D-glucosamine + a (3R)-hydroxyacyl-[ACP] = a UDP-2-N,3-O-bis[(3R)-3-hydroxyacyl]-alpha-D-glucosamine + holo-[ACP] + H(+). It functions in the pathway bacterial outer membrane biogenesis; LPS lipid A biosynthesis. In terms of biological role, catalyzes the N-acylation of UDP-3-O-acylglucosamine using 3-hydroxyacyl-ACP as the acyl donor. Is involved in the biosynthesis of lipid A, a phosphorylated glycolipid that anchors the lipopolysaccharide to the outer membrane of the cell. This is UDP-3-O-acylglucosamine N-acyltransferase from Bacteroides thetaiotaomicron (strain ATCC 29148 / DSM 2079 / JCM 5827 / CCUG 10774 / NCTC 10582 / VPI-5482 / E50).